The chain runs to 71 residues: Ubiquinol-cytochrome c reductase complex assembly factor 6 (71 aa).

Topologically, residues 1-8 (MPAGVPMS) are mitochondrial matrix. A helical; Signal-anchor for type II membrane protein transmembrane segment spans residues 9–25 (TYLKMLAASLLAMCAGA). Residues 26-71 (EVVHRYYRPDLTIPEIPPKRGELKTELLGLKERKHKPQISQQEELK) are Mitochondrial intermembrane-facing. Residues 52–71 (LLGLKERKHKPQISQQEELK) form a disordered region.

Belongs to the UQCC6 family. Interacts with UQCRC1. Interacts with UQCRQ. Interacts with UQCC5. Forms a complex, named COMB/coordinator of mitochondrial CYTB biogenesis, composed of UQCC1, UQCC2, UQCC4, UQCC5 and UQCC6; stabilizes nascent cytochrome b/MT-CYB and promotes its membrane insertion. Forms a complex, named COMA, composed of UQCC1, UQCC2 and UQCC4; activates MT-CYB translation. Forms a complex, named COMC, composed of UQCC1, UQCC2; UQCC3 and UQCC4; mediates MT-CYB hemylation and association with the first nuclear-encoded complex III subunit UQCRQ. Interacts with MT-CYB.

The protein resides in the mitochondrion inner membrane. Functionally, required for the assembly and stability of the mitochondrial ubiquinol-cytochrome c reductase complex (complex III (CIII) or cytochrome b-c1 complex), a multisubunit transmembrane complex that is part of the mitochondrial electron transport chain (ETC) which drives oxidative phosphorylation. Mediates early complex III biogenesis. Participates in regulating the levels of electron transport chain proteins, and therefore energy supply, in response to changes in energy demand. Also required for cytochrome c oxidase complex (complex IV) assembly. In Pongo abelii (Sumatran orangutan), this protein is Ubiquinol-cytochrome c reductase complex assembly factor 6.